Reading from the N-terminus, the 142-residue chain is MSASSPLSPTAGGPFAAWYAAFGDWARTDGAAWLYLFKALLAAFIALGVSMRLDLPAPKTAMTTVFIVMQRKAAPCSRKASTGSPARSSGSSRRSRSSGCSRSSRSCSCWRSPCGSRCAPPAPRATATSAVTASCSPAIRPR.

The segment at 73 to 142 (AAPCSRKAST…ASCSPAIRPR (70 aa)) is disordered. The segment covering 81–142 (STGSPARSSG…ASCSPAIRPR (62 aa)) has biased composition (low complexity).

Its function is as follows. Involved in the resistance (detoxification) of the fungal toxin fusaric acid. The protein is Fusaric acid resistance protein FusB (fusB) of Burkholderia cepacia (Pseudomonas cepacia).